Consider the following 350-residue polypeptide: Ribosomal RNA large subunit methyltransferase M (350 aa).

Residues Ser184, 217–220 (APGG), Asp236, Asp256, and Asp272 contribute to the S-adenosyl-L-methionine site. The Proton acceptor role is filled by Lys301.

Belongs to the class I-like SAM-binding methyltransferase superfamily. RNA methyltransferase RlmE family. RlmM subfamily. As to quaternary structure, monomer.

It is found in the cytoplasm. The enzyme catalyses cytidine(2498) in 23S rRNA + S-adenosyl-L-methionine = 2'-O-methylcytidine(2498) in 23S rRNA + S-adenosyl-L-homocysteine + H(+). Its function is as follows. Catalyzes the 2'-O-methylation at nucleotide C2498 in 23S rRNA. The polypeptide is Ribosomal RNA large subunit methyltransferase M (Marinomonas sp. (strain MWYL1)).